We begin with the raw amino-acid sequence, 246 residues long: Carboxylesterase (246 aa).

S93 acts as the Nucleophile in catalysis. Catalysis depends on charge relay system residues D192 and H222.

Belongs to the lipase/esterase LIP3/BchO family. As to quaternary structure, homodimer.

It carries out the reaction a carboxylic ester + H2O = an alcohol + a carboxylate + H(+). In terms of biological role, involved in the detoxification of xenobiotics. Shows maximal activity with C6 substrates, with gradually decreasing activity from C8 to C12 substrates. No activity for higher chain length substrates acids rather than long-chain ones. The protein is Carboxylesterase (est) of Bacillus subtilis (strain 168).